Consider the following 208-residue polypeptide: FMN-dependent NADH:quinone oxidoreductase 2 (208 aa).

Residue 17-19 coordinates FMN; the sequence is SVS.

The protein belongs to the azoreductase type 1 family. In terms of assembly, homodimer. Requires FMN as cofactor.

The catalysed reaction is 2 a quinone + NADH + H(+) = 2 a 1,4-benzosemiquinone + NAD(+). It carries out the reaction N,N-dimethyl-1,4-phenylenediamine + anthranilate + 2 NAD(+) = 2-(4-dimethylaminophenyl)diazenylbenzoate + 2 NADH + 2 H(+). Functionally, quinone reductase that provides resistance to thiol-specific stress caused by electrophilic quinones. In terms of biological role, also exhibits azoreductase activity. Catalyzes the reductive cleavage of the azo bond in aromatic azo compounds to the corresponding amines. The polypeptide is FMN-dependent NADH:quinone oxidoreductase 2 (Halalkalibacterium halodurans (strain ATCC BAA-125 / DSM 18197 / FERM 7344 / JCM 9153 / C-125) (Bacillus halodurans)).